Reading from the N-terminus, the 314-residue chain is Aspartate carbamoyltransferase catalytic subunit (314 aa).

Arg-53 and Thr-54 together coordinate carbamoyl phosphate. Lys-82 serves as a coordination point for L-aspartate. Carbamoyl phosphate contacts are provided by Arg-103, His-131, and Gln-134. L-aspartate-binding residues include Arg-164 and Arg-230. Carbamoyl phosphate is bound by residues Leu-267 and Pro-268.

This sequence belongs to the aspartate/ornithine carbamoyltransferase superfamily. ATCase family. Heterooligomer of catalytic and regulatory chains.

The enzyme catalyses carbamoyl phosphate + L-aspartate = N-carbamoyl-L-aspartate + phosphate + H(+). It participates in pyrimidine metabolism; UMP biosynthesis via de novo pathway; (S)-dihydroorotate from bicarbonate: step 2/3. In terms of biological role, catalyzes the condensation of carbamoyl phosphate and aspartate to form carbamoyl aspartate and inorganic phosphate, the committed step in the de novo pyrimidine nucleotide biosynthesis pathway. In Methanococcus aeolicus (strain ATCC BAA-1280 / DSM 17508 / OCM 812 / Nankai-3), this protein is Aspartate carbamoyltransferase catalytic subunit.